We begin with the raw amino-acid sequence, 1081 residues long: Psi-producing oxygenase A (1081 aa).

The tract at residues 105-446 is linoleate 8R-lipoxygenase; the sequence is TKSFLNMLWN…DGAFNDDDLV (342 aa). Residue histidine 202 participates in heme b binding. Tyrosine 374 is a catalytic residue. Histidine 377 lines the heme b pocket. The tract at residues 654-1081 is 9,12-octadecadienoate 8-hydroperoxide 8R-isomerase; sequence IFISSHAACM…GELPQLKEDF (428 aa).

It belongs to the peroxidase family. As to quaternary structure, homotetramer. Heme b is required as a cofactor.

The enzyme catalyses (9Z,12Z)-octadecadienoate + O2 = (8R,9Z,12Z)-8-hydroperoxyoctadeca-9,12-dienoate. The catalysed reaction is (8R,9Z,12Z)-8-hydroperoxyoctadeca-9,12-dienoate = (5S,8R,9Z,12Z)-5,8-dihydroxyoctadeca-9,12-dienoate. Functionally, bifunctional heme-containing enzyme that oxidizes linoleic acid to (8R,9Z,12Z)-8-hydroperoxyoctadeca-9,12-dienoate (within the N-terminal heme peroxidase domain), which is subsequently isomerized to (5S,8R,9Z,12Z)-5,8-dihydroxyoctadeca-9,12-dienoate (within the C-terminal P450 heme thiolate domain). Oxidized unsaturated fatty acids, so-called oxylipins, derived from endogenous fatty acids, influence the development of the asexual conidiophores and sexual cleistothecia and regulate the secondary metabolism. These substances were collectively named psi factors and are primarily a mixture of hydroxylated oleic, linoleic and alpha-linolenic acids. They are termed psi-beta, psi-alpha, and psi-gamma, respectively. This chain is Psi-producing oxygenase A (ppoA), found in Emericella nidulans (Aspergillus nidulans).